We begin with the raw amino-acid sequence, 1079 residues long: Carbamoyl phosphate synthase large chain (1079 aa).

Residues 2 to 403 (PKSTDIKSIL…SIQKAIRGLE (402 aa)) are carboxyphosphate synthetic domain. Residues Arg129, Arg169, Gly175, Gly176, Glu208, Leu210, Glu215, Gly241, Ile242, His243, Gln285, and Glu299 each contribute to the ATP site. Positions 133–328 (EHSMKKLNLE…IAKIAAKLAI (196 aa)) constitute an ATP-grasp 1 domain. Mg(2+)-binding residues include Gln285, Glu299, and Asn301. Mn(2+) is bound by residues Gln285, Glu299, and Asn301. The oligomerization domain stretch occupies residues 404–553 (VGASGFDSKI…YSTWEDECES (150 aa)). A carbamoyl phosphate synthetic domain region spans residues 554–936 (HPSKNNKKII…AFSKSMLGAH (383 aa)). Residues 679–870 (QKTVNKLRLQ…LAKISVRVMC (192 aa)) enclose the ATP-grasp 2 domain. 10 residues coordinate ATP: Arg715, Gln754, Leu756, Glu761, Gly786, Val787, His788, Ser789, Gln829, and Glu841. Residues Gln829, Glu841, and Asn843 each contribute to the Mg(2+) site. Mn(2+) contacts are provided by Gln829, Glu841, and Asn843. One can recognise an MGS-like domain in the interval 937–1079 (TNMKKSGRVL…KKIQLFYTKK (143 aa)). Residues 937–1079 (TNMKKSGRVL…KKIQLFYTKK (143 aa)) form an allosteric domain region.

The protein belongs to the CarB family. In terms of assembly, composed of two chains; the small (or glutamine) chain promotes the hydrolysis of glutamine to ammonia, which is used by the large (or ammonia) chain to synthesize carbamoyl phosphate. Tetramer of heterodimers (alpha,beta)4. Mg(2+) is required as a cofactor. It depends on Mn(2+) as a cofactor.

The catalysed reaction is hydrogencarbonate + L-glutamine + 2 ATP + H2O = carbamoyl phosphate + L-glutamate + 2 ADP + phosphate + 2 H(+). It catalyses the reaction hydrogencarbonate + NH4(+) + 2 ATP = carbamoyl phosphate + 2 ADP + phosphate + 2 H(+). The protein operates within amino-acid biosynthesis; L-arginine biosynthesis; carbamoyl phosphate from bicarbonate: step 1/1. Its pathway is pyrimidine metabolism; UMP biosynthesis via de novo pathway; (S)-dihydroorotate from bicarbonate: step 1/3. Large subunit of the glutamine-dependent carbamoyl phosphate synthetase (CPSase). CPSase catalyzes the formation of carbamoyl phosphate from the ammonia moiety of glutamine, carbonate, and phosphate donated by ATP, constituting the first step of 2 biosynthetic pathways, one leading to arginine and/or urea and the other to pyrimidine nucleotides. The large subunit (synthetase) binds the substrates ammonia (free or transferred from glutamine from the small subunit), hydrogencarbonate and ATP and carries out an ATP-coupled ligase reaction, activating hydrogencarbonate by forming carboxy phosphate which reacts with ammonia to form carbamoyl phosphate. In Buchnera aphidicola subsp. Acyrthosiphon pisum (strain APS) (Acyrthosiphon pisum symbiotic bacterium), this protein is Carbamoyl phosphate synthase large chain.